Reading from the N-terminus, the 123-residue chain is uncharacterized protein (123 aa).

A Rhodanese domain is found at 17–117; sequence SNDNAFLVDV…NNQDKGWKQN (101 aa).

This is an uncharacterized protein from Rickettsia conorii (strain ATCC VR-613 / Malish 7).